An 85-amino-acid chain; its full sequence is Coiled-coil-helix-coiled-coil-helix domain-containing protein 7 (85 aa).

Residues 13–55 (INPCLSESDASTRCLDENNYDKERCSTYFLKYKNCRKFWHSIM) form the CHCH domain. Short sequence motifs (cx9C motif) lie at residues 16–26 (CLSESDASTRC) and 37–47 (CSTYFLKYKNC). 2 disulfide bridges follow: cysteine 16–cysteine 47 and cysteine 26–cysteine 37.

It belongs to the CHCHD7 family. In terms of assembly, monomer.

It is found in the mitochondrion intermembrane space. This is Coiled-coil-helix-coiled-coil-helix domain-containing protein 7 (CHCHD7) from Macaca fascicularis (Crab-eating macaque).